Reading from the N-terminus, the 87-residue chain is UPF0250 protein CKO_02527 (87 aa).

This sequence belongs to the UPF0250 family.

The chain is UPF0250 protein CKO_02527 from Citrobacter koseri (strain ATCC BAA-895 / CDC 4225-83 / SGSC4696).